Reading from the N-terminus, the 459-residue chain is Putrescine aminotransferase (459 aa).

Pyridoxal 5'-phosphate is bound by residues 150–151 (GT) and glutamine 274. An N6-(pyridoxal phosphate)lysine modification is found at lysine 300. Position 332 (threonine 332) interacts with pyridoxal 5'-phosphate.

Belongs to the class-III pyridoxal-phosphate-dependent aminotransferase family. Putrescine aminotransferase subfamily. It depends on pyridoxal 5'-phosphate as a cofactor.

It carries out the reaction an alkane-alpha,omega-diamine + 2-oxoglutarate = an omega-aminoaldehyde + L-glutamate. The enzyme catalyses putrescine + 2-oxoglutarate = 1-pyrroline + L-glutamate + H2O. The catalysed reaction is cadaverine + 2-oxoglutarate = 5-aminopentanal + L-glutamate. It functions in the pathway amine and polyamine degradation; putrescine degradation; 4-aminobutanal from putrescine (transaminase route): step 1/1. Catalyzes the aminotransferase reaction from putrescine to 2-oxoglutarate, leading to glutamate and 4-aminobutanal, which spontaneously cyclizes to form 1-pyrroline. This is the first step in one of two pathways for putrescine degradation, where putrescine is converted into 4-aminobutanoate (gamma-aminobutyrate or GABA) via 4-aminobutanal. Also functions as a cadaverine transaminase in a a L-lysine degradation pathway to succinate that proceeds via cadaverine, glutarate and L-2-hydroxyglutarate. The sequence is that of Putrescine aminotransferase from Enterobacter sp. (strain 638).